The following is a 269-amino-acid chain: Cyclic AMP-dependent transcription factor ATF-1 (269 aa).

Residues 1–90 (MEDSHKSNTT…GEGENPSISA (90 aa)) are disordered. A compositionally biased stretch (polar residues) spans 9-18 (TTETASQPGS). The KID domain occupies 31–90 (QVSSLSESEESQDSSDSIGSSQKAHGILARRPSYRKILKDLSSEDTRGRKGEGENPSISA). The residue at position 63 (S63) is a Phosphoserine; by CaMK1, CDK3, RPS6KA4 and RPS6KA5. Over residues 67–83 (ILKDLSSEDTRGRKGEG) the composition is skewed to basic and acidic residues. S196 carries the post-translational modification Phosphoserine; by HIPK2. K206 is covalently cross-linked (Glycyl lysine isopeptide (Lys-Gly) (interchain with G-Cter in SUMO2)). Residues 211–269 (QLRREIRLMKNREAARECRRKKKEYVKCLENRVAVLENQNKTLIEELKTLKDLYSHKSV) form the bZIP domain. The basic motif stretch occupies residues 213 to 237 (RREIRLMKNREAARECRRKKKEYVK). A leucine-zipper region spans residues 239-260 (LENRVAVLENQNKTLIEELKTL).

It belongs to the bZIP family. ATF subfamily. In terms of assembly, binds DNA as a dimer. Interacts with HIPK2 and CDK3. Interacts with MOTS-c, a peptide produced by the mitochondrially encoded 12S rRNA MT-RNR1; the interaction occurs in the nucleus following metabolic stress. Phosphorylated at Ser-196 by HIPK2 in response to genotoxic stress. This phosphorylation promotes transcription repression of FTH1 and other antioxidant detoxification genes. The CDK3-mediated phosphorylation at Ser-63 promotes its transactivation and transcriptional activities. Phosphorylated at Ser-63 by RPS6KA4 and RPS6KA5 in response to mitogenic or stress stimuli.

The protein localises to the nucleus. Binds the cAMP response element (CRE) (consensus: 5'-GTGACGT[AC][AG]-3'), a sequence present in many viral and cellular promoters. Binds to the Tax-responsive element (TRE) of HTLV-I. Mediates PKA-induced stimulation of CRE-reporter genes. Represses the expression of FTH1 and other antioxidant detoxification genes. Triggers cell proliferation and transformation. The chain is Cyclic AMP-dependent transcription factor ATF-1 (Atf1) from Mus musculus (Mouse).